Reading from the N-terminus, the 606-residue chain is Melanoma-associated antigen D2 (606 aa).

Disordered regions lie at residues 1–29 and 52–204; these read MSDTSESGAGLTRFQAEASEKDSSSMMQT and SEDV…GGRR. N-acetylserine is present on Ser2. Ser5 is subject to Phosphoserine. Phosphothreonine is present on Thr72. A compositionally biased stretch (polar residues) spans 79–100; sequence PATQASSTTQLTDTQVLATENK. Over residues 122-131 the composition is skewed to basic and acidic residues; sequence ETKKVSHVAD. Residues 142–164 are compositionally biased toward low complexity; the sequence is EAAPSQASADEPEPESAAAQSQE. At Ser157 the chain carries Phosphoserine. Residues 171 to 181 are compositionally biased toward basic residues; the sequence is KVKAKKARKVK. Phosphoserine is present on residues Ser190, Ser191, Ser194, Ser197, Ser244, and Ser247. Residues 248 to 260 are compositionally biased toward basic residues; it reads PKARRGKARRRAA. Residues 248-275 form a disordered region; that stretch reads PKARRGKARRRAAKLQSSQEPEAPPPRD. A phosphoserine mark is found at Ser264 and Ser265. An MAGE domain is found at 279-478; that stretch reads LQGRANDLVK…KEWAAQYREA (200 aa). The disordered stretch occupies residues 534 to 563; sequence GAEAKAKAQESGSASTGASTSTNNSASASA.

In terms of assembly, interacts with GNAS.

Functionally, regulates the expression, localization to the plasma membrane and function of the sodium chloride cotransporters SLC12A1 and SLC12A3, two key components of salt reabsorption in the distal renal tubule. The sequence is that of Melanoma-associated antigen D2 (MAGED2) from Pongo abelii (Sumatran orangutan).